Here is a 342-residue protein sequence, read N- to C-terminus: Trans-3-hydroxy-L-proline dehydratase (342 aa).

The active-site Proton acceptor is S90. Residues 91-92 (GS), D252, and 257-258 (GT) contribute to the substrate site.

Belongs to the proline racemase family.

The enzyme catalyses trans-3-hydroxy-L-proline = 1-pyrroline-2-carboxylate + H2O. Functionally, catalyzes the dehydration of trans-3-hydroxy-L-proline (t3LHyp) to Delta(1)-pyrroline-2-carboxylate (Pyr2C). Is likely involved in a degradation pathway that converts t3LHyp to L-proline. Displays neither proline racemase activity nor 4-hydroxyproline 2-epimerase activity. The chain is Trans-3-hydroxy-L-proline dehydratase from Allorhizobium ampelinum (strain ATCC BAA-846 / DSM 112012 / S4) (Agrobacterium vitis (strain S4)).